The primary structure comprises 145 residues: Large ribosomal subunit protein uL15 (145 aa).

The interval 1–54 (MKLNELKYTPGSKKEATRVGRGMASGKGKTATRGHKGQNSRSGGGVRPGFEGGQ) is disordered. The segment covering 42-52 (SGGGVRPGFEG) has biased composition (gly residues).

Belongs to the universal ribosomal protein uL15 family. Part of the 50S ribosomal subunit.

Binds to the 23S rRNA. The protein is Large ribosomal subunit protein uL15 of Mycoplasma capricolum subsp. capricolum (strain California kid / ATCC 27343 / NCTC 10154).